The primary structure comprises 148 residues: MAIYGIGTDIAQVSRVAAVLERTGGRFAEKVLGPDELRVFHARRARSEARGIAFLATRFSAKEAFSKAIGLGMHWPMTWRALQTLNHPSGEPYVVASGELADWLAARGITARVTVSDERDYAVSFVVAETDAETDAAPAPVPVSRTSS.

2 residues coordinate Mg(2+): Asp9 and Glu63.

This sequence belongs to the P-Pant transferase superfamily. AcpS family. Mg(2+) serves as cofactor.

The protein resides in the cytoplasm. The enzyme catalyses apo-[ACP] + CoA = holo-[ACP] + adenosine 3',5'-bisphosphate + H(+). In terms of biological role, transfers the 4'-phosphopantetheine moiety from coenzyme A to a Ser of acyl-carrier-protein. This chain is Holo-[acyl-carrier-protein] synthase, found in Burkholderia cenocepacia (strain HI2424).